A 118-amino-acid polypeptide reads, in one-letter code: Non-specific lipid-transfer protein 3 (118 aa).

Residues 1-25 (MARAAATQLVLVAMVAAMLLVATDA) form the signal peptide. 4 cysteine pairs are disulfide-bonded: cysteine 29/cysteine 77, cysteine 39/cysteine 54, cysteine 55/cysteine 100, and cysteine 75/cysteine 114.

This sequence belongs to the plant LTP family.

Functionally, plant non-specific lipid-transfer proteins transfer phospholipids as well as galactolipids across membranes. May play a role in wax or cutin deposition in the cell walls of expanding epidermal cells and certain secretory tissues. The sequence is that of Non-specific lipid-transfer protein 3 (LTP3) from Hordeum vulgare (Barley).